A 383-amino-acid polypeptide reads, in one-letter code: NifS-like protein (383 aa).

Pyridoxal 5'-phosphate is bound by residues 58–59 and 184–186; these read SE and SLN.

It belongs to the class-V pyridoxal-phosphate-dependent aminotransferase family. NifS/IscS subfamily. The cofactor is pyridoxal 5'-phosphate.

Its subcellular location is the virion. The chain is NifS-like protein from African swine fever virus (isolate Pig/Kenya/KEN-50/1950) (ASFV).